Here is a 560-residue protein sequence, read N- to C-terminus: Dihydroxy-acid dehydratase (560 aa).

The segment at 1 to 20 is disordered; it reads MGDNLKKRSSMTTDGDNRAP. Cys52 contributes to the [2Fe-2S] cluster binding site. Asp84 provides a ligand contact to Mg(2+). Position 125 (Cys125) interacts with [2Fe-2S] cluster. Mg(2+)-binding residues include Asp126 and Lys127. N6-carboxylysine is present on Lys127. Cys197 is a [2Fe-2S] cluster binding site. Residue Glu448 participates in Mg(2+) binding. The active-site Proton acceptor is Ser474.

This sequence belongs to the IlvD/Edd family. As to quaternary structure, homodimer. [2Fe-2S] cluster is required as a cofactor. The cofactor is Mg(2+).

The enzyme catalyses (2R)-2,3-dihydroxy-3-methylbutanoate = 3-methyl-2-oxobutanoate + H2O. The catalysed reaction is (2R,3R)-2,3-dihydroxy-3-methylpentanoate = (S)-3-methyl-2-oxopentanoate + H2O. It participates in amino-acid biosynthesis; L-isoleucine biosynthesis; L-isoleucine from 2-oxobutanoate: step 3/4. It functions in the pathway amino-acid biosynthesis; L-valine biosynthesis; L-valine from pyruvate: step 3/4. Functionally, functions in the biosynthesis of branched-chain amino acids. Catalyzes the dehydration of (2R,3R)-2,3-dihydroxy-3-methylpentanoate (2,3-dihydroxy-3-methylvalerate) into 2-oxo-3-methylpentanoate (2-oxo-3-methylvalerate) and of (2R)-2,3-dihydroxy-3-methylbutanoate (2,3-dihydroxyisovalerate) into 2-oxo-3-methylbutanoate (2-oxoisovalerate), the penultimate precursor to L-isoleucine and L-valine, respectively. This is Dihydroxy-acid dehydratase from Leptospira interrogans serogroup Icterohaemorrhagiae serovar Lai (strain 56601).